Here is a 699-residue protein sequence, read N- to C-terminus: Receptor-type tyrosine-protein phosphatase epsilon (699 aa).

The N-terminal stretch at methionine 1–glycine 22 is a signal peptide. A compositionally biased stretch (low complexity) spans glycine 20–threonine 36. A disordered region spans residues glycine 20–aspartate 41. N-linked (GlcNAc...) asparagine glycans are attached at residues asparagine 23 and asparagine 31. Topologically, residues asparagine 23–proline 47 are extracellular. The helical transmembrane segment at leucine 48–phenylalanine 68 threads the bilayer. The Cytoplasmic portion of the chain corresponds to arginine 69 to lysine 699. 2 consecutive Tyrosine-protein phosphatase domains span residues phenylalanine 134–tyrosine 393 and leucine 425–phenylalanine 688. Substrate-binding positions include aspartate 302, cysteine 334–arginine 340, and glutamine 378. The active-site Phosphocysteine intermediate is the cysteine 334. Cysteine 629 functions as the Phosphocysteine intermediate in the catalytic mechanism. Phosphotyrosine is present on tyrosine 695.

This sequence belongs to the protein-tyrosine phosphatase family. Receptor class 4 subfamily. Monomer. Isoform 2: Homodimer. Can form oligomers. Dimerization is increased by oxidative stress and decreased by EGFR. Isoform 2 interacts with GRB2. In terms of processing, a catalytically active cytoplasmic form (p65) is produced by proteolytic cleavage of either isoform 1, isoform 2 or isoform 3. Post-translationally, isoform 1 and isoform 2 are phosphorylated on tyrosine residues by tyrosine kinase Neu. N-glycosylated. Isoform 1 is highly expressed in the brain, lung, spleen and testis. Isoform 2 is highly expressed in thymus, spleen and lung. Isoform 1 and isoform 2 are expressed in primary hepatocytes.

It localises to the cell membrane. It is found in the cytoplasm. The enzyme catalyses O-phospho-L-tyrosyl-[protein] + H2O = L-tyrosyl-[protein] + phosphate. Functionally, isoform 1 plays a critical role in signaling transduction pathways and phosphoprotein network topology in red blood cells. May play a role in osteoclast formation and function. Acts as a negative regulator of insulin receptor (IR) signaling and is involved in insulin-induced glucose metabolism mainly through direct dephosphorylation and inactivation of IR in hepatocytes and liver. In terms of biological role, isoform 2 acts as a negative regulator of insulin receptor (IR) signaling in skeletal muscle. Regulates insulin-induced tyrosine phosphorylation of insulin receptor (IR) and insulin receptor substrate 1 (IRS-1), phosphorylation of protein kinase B and glycogen synthase kinase-3 and insulin induced stimulation of glucose uptake. Its function is as follows. Isoform 1 and isoform 2 act as a negative regulator of FceRI-mediated signal transduction leading to cytokine production and degranulation, most likely by acting at the level of SYK to affect downstream events such as phosphorylation of SLP76 and LAT and mobilization of Ca(2+). The protein is Receptor-type tyrosine-protein phosphatase epsilon (Ptpre) of Rattus norvegicus (Rat).